A 147-amino-acid polypeptide reads, in one-letter code: UPF0178 protein Tgr7_2584 (147 aa).

This sequence belongs to the UPF0178 family.

In Thioalkalivibrio sulfidiphilus (strain HL-EbGR7), this protein is UPF0178 protein Tgr7_2584.